The primary structure comprises 272 residues: Lectin-like protein At1g53070 (272 aa).

Positions 1-23 are cleaved as a signal peptide; it reads MKIQILCFTTLFLAIFTSQVTTA. The interval 24-271 is legume-lectin like; it reads YKFKFDYFGN…RHEIWDWTFQ (248 aa). Residues N33, N84, and N134 are each glycosylated (N-linked (GlcNAc...) asparagine). Residue S241 is modified to Phosphoserine.

The protein belongs to the leguminous lectin family.

The protein resides in the secreted. The protein localises to the extracellular space. It localises to the apoplast. The chain is Lectin-like protein At1g53070 from Arabidopsis thaliana (Mouse-ear cress).